Consider the following 333-residue polypeptide: Glycerol-3-phosphate dehydrogenase [NAD(P)+] (333 aa).

NADPH-binding residues include tryptophan 13, lysine 33, and lysine 108. Sn-glycerol 3-phosphate is bound by residues lysine 108 and glycine 138. Serine 142 contributes to the NADPH binding site. Positions 193, 246, 256, 257, and 258 each coordinate sn-glycerol 3-phosphate. The active-site Proton acceptor is lysine 193. Arginine 257 is an NADPH binding site. Residues valine 281 and glutamate 283 each contribute to the NADPH site.

The protein belongs to the NAD-dependent glycerol-3-phosphate dehydrogenase family.

It localises to the cytoplasm. It carries out the reaction sn-glycerol 3-phosphate + NAD(+) = dihydroxyacetone phosphate + NADH + H(+). It catalyses the reaction sn-glycerol 3-phosphate + NADP(+) = dihydroxyacetone phosphate + NADPH + H(+). The protein operates within membrane lipid metabolism; glycerophospholipid metabolism. In terms of biological role, catalyzes the reduction of the glycolytic intermediate dihydroxyacetone phosphate (DHAP) to sn-glycerol 3-phosphate (G3P), the key precursor for phospholipid synthesis. This is Glycerol-3-phosphate dehydrogenase [NAD(P)+] from Bifidobacterium longum (strain DJO10A).